Reading from the N-terminus, the 587-residue chain is MSVSAAARHLESLLPRLASLRHYLQFHARLLTSGHLGAHPGLRARFLDRLALSPHPAALPHALLLLRSLPTPATNDLNAALRGLAASPHPARSLLLLAGRLLPALLPRPDALSLSFALKASARCSDAHTTVQLHALVLRLGVAADVRLLTTLLDSYAKCGDLASARKVFDEMTVRDVATWNSLLAGLAQGTEPNLALALFHRLANSFQELPSREEPNEVTIVAALSACAQIGLLKDGMYVHEFAKRFGLDRNVRVCNSLIDMYSKCGSLSRALDVFHSIKPEDQTLVSYNAAIQAHSMHGHGGDALRLFDEMPTRIEPDGVTYLAVLCGCNHSGLVDDGLRVFNSMRVAPNMKHYGTIVDLLGRAGRLTEAYDTVISMPFPADIVLWQTLLGAAKMHGVVELAELAANKLAELGSNVDGDYVLLSNVYASKARWMDVGRVRDTMRSNDVRKVPGFSYTEIDGVMHKFINGDKEHPRWQEIYRALEDIVSRISELGYEPETSNVLHDIGEEEKQYALCYHSEKLAIAFGLIATPPGETLRVIKNLRICGDCHVVAKLISKAYGRVIVIRDRARFHRFEDGQCSCRDYW.

The transit peptide at 1–30 directs the protein to the mitochondrion; sequence MSVSAAARHLESLLPRLASLRHYLQFHARL. PPR repeat units follow at residues 145-179, 200-203, 217-251, 252-286, 287-315, 319-349, 351-381, and 383-417; these read DVRLLTTLLDSYAKCGDLASARKVFDEMTVRDVAT, FHRL, NEVTIVAALSACAQIGLLKDGMYVHEFAKRFGLDR, NVRVCNSLIDMYSKCGSLSRALDVFHSIKPEDQTL, VSYNAAIQAHSMHGHGGDALRLFDEMPTR, DGVTYLAVLCGCNHSGLVDDGLRVFNSMRVA, NMKHYGTIVDLLGRAGRLTEAYDTVISMPFP, and DIVLWQTLLGAAKMHGVVELAELAANKLAELGSNV. The tract at residues 386–461 is type E motif; that stretch reads LWQTLLGAAK…VPGFSYTEID (76 aa). Residues 462-492 form a type E(+) motif region; sequence GVMHKFINGDKEHPRWQEIYRALEDIVSRIS. Residues 493–587 form a type DYW motif region; it reads ELGYEPETSN…DGQCSCRDYW (95 aa).

It is found in the mitochondrion. Its function is as follows. Involved in multiple sites RNA editing events in mitochondria. Essential for C-to-U RNA editing at seven specific sites of nad2, nad4, cox2, cox3 and ccmC transcripts, all coding for proteins involved in the mitochondrial electron transport chain coupled to ATP generation. Required for normal growth and development. The chain is Pentatricopeptide repeat-containing protein OGR1, mitochondrial from Oryza sativa subsp. japonica (Rice).